Reading from the N-terminus, the 560-residue chain is Putative protease Do-like 11, mitochondrial (560 aa).

The N-terminal 65 residues, 1–65, are a transit peptide targeting the mitochondrion; that stretch reads MFFRPCVHTV…RRSSTSAAER (65 aa). Residues 117-302 form a serine protease region; the sequence is TEYSKSKPWK…ESRQYSCFGS (186 aa). Catalysis depends on charge relay system residues H150, D184, and S258. Residues 288 to 384 enclose the PDZ domain; the sequence is ITSVQESRQY…YLVSMKKPGE (97 aa).

This sequence belongs to the peptidase S1C family.

It is found in the mitochondrion membrane. Putative serine protease. This is Putative protease Do-like 11, mitochondrial (DEGP11) from Arabidopsis thaliana (Mouse-ear cress).